The sequence spans 363 residues: S-methylmethionine--homocysteine S-methyltransferase BHMT2 (363 aa).

One can recognise a Hcy-binding domain in the interval 11–305; sequence KGILERLDSG…YHIRAIAEEL (295 aa). Zn(2+) is bound by residues Cys-208, Cys-290, and Cys-291. A Phosphoserine modification is found at Ser-321.

Homotetramer. Zn(2+) serves as cofactor. In terms of tissue distribution, expressed in fetal heart, lung, liver, kidney and eye.

The catalysed reaction is S-methyl-L-methionine + L-homocysteine = 2 L-methionine + H(+). It participates in amino-acid biosynthesis; L-methionine biosynthesis via de novo pathway; L-methionine from L-homocysteine (BhmT route): step 1/1. Involved in the regulation of homocysteine metabolism. Converts homocysteine to methionine using S-methylmethionine (SMM) as a methyl donor. The polypeptide is S-methylmethionine--homocysteine S-methyltransferase BHMT2 (Bhmt2) (Mus musculus (Mouse)).